We begin with the raw amino-acid sequence, 319 residues long: MLRYCLHRLLIGLGMLLALTILIFVLLQLTPGDPIDAYINPNVAMTQAEMDALRAQLGLDRPLPVQYLAWLGQAVQGNLGHSLQRFNETVSGLIASRIGPTLLLMAAGLAIAIVIGVTTGIISAVRRNSFLDYSFSVLALLGISSPAFLTALLGLYVFSVRLKWAPSGGMLTPATDFSIPDLLRHLALPALVLSIGHAALIMRYMRSSMLETLNQDYVRTARAKGVREFWVVVKHTLRNAMLPVVTLIGSTIGLAVGGAIFIESVFNWPGMGLLLINAVETRDYPVIMGATLVIGACVIIVNILTDLAYAVIDPRIKVT.

6 helical membrane-spanning segments follow: residues 9–29, 102–122, 138–158, 182–202, 242–262, and 284–304; these read LLIGLGMLLALTILIFVLLQL, LLLMAAGLAIAIVIGVTTGII, LALLGISSPAFLTALLGLYVF, LLRHLALPALVLSIGHAALIM, LPVVTLIGSTIGLAVGGAIFI, and YPVIMGATLVIGACVIIVNIL. In terms of domain architecture, ABC transmembrane type-1 spans 98–305; that stretch reads IGPTLLLMAA…ACVIIVNILT (208 aa).

This sequence belongs to the binding-protein-dependent transport system permease family. As to quaternary structure, the complex is composed of two ATP-binding proteins (BRA0404 and BRA0405), two transmembrane proteins (BRA0407 and BRA0408) and a solute-binding protein (BRA0409).

The protein localises to the cell inner membrane. Functionally, probably part of an ABC transporter complex that could be involved in peptide import. Probably responsible for the translocation of the substrate across the membrane. The protein is Putative peptide permease protein BRA0408/BS1330_II0405 of Brucella suis biovar 1 (strain 1330).